The chain runs to 86 residues: Colicin-E2 immunity protein (86 aa).

The protein belongs to the colicins ColE2/ColE8/ColE9 and pyocins S1/S2 family.

Its function is as follows. This protein is able to protect a cell, which harbors the plasmid ColE2 encoding colicin E2, against colicin E2. The polypeptide is Colicin-E2 immunity protein (imm) (Escherichia coli).